The primary structure comprises 513 residues: Histone acetyltransferase KAT5 (513 aa).

Residues 8–65 enclose the Tudor-knot domain; sequence IEGCRLPVLRRNQDNEDEWPLAEILSVKDISGRKLFYVHYIDFNKRLDEWVTHERLDL. Position 52 is an N6-acetyllysine (Lys52). The tract at residues 69–106 is disordered; the sequence is QFPKKEAKTPTKNGLPGSRPGSPEREVPASAQASGKTL. Residue Ser86 is modified to Phosphoserine. A Phosphoserine; by CDK1 and CDK9 modification is found at Ser90. An N6-acetyllysine; by autocatalysis mark is found at Lys104 and Lys120. Residues 122–217 form a disordered region; sequence REAIPGGEPD…SAPRMTGSLV (96 aa). Polar residues predominate over residues 133–144; the sequence is PLSSSSCLQPNH. 4 positions are modified to N6-acetyllysine; by autocatalysis: Lys148, Lys150, Lys187, and Lys189. Phosphoserine is present on Ser199. Positions 227-504 constitute an MYST-type HAT domain; the sequence is TRMKNIECIE…IDSKCLHFTP (278 aa). A C2HC MYST-type zinc finger spans residues 260–285; sequence LYLCEFCLKYGRSLKCLQRHLTKCDL. At Lys327 the chain carries N6-acetyllysine; by autocatalysis. Positions 368–513 are interaction with ATF2; that stretch reads ACILTLPPYQ…PKDWSKRGKW (146 aa). Residues 370–372 and 377–383 contribute to the acetyl-CoA site; these read ILT and QRRGYGK. Glu403 (proton donor/acceptor) is an active-site residue. Acetyl-CoA-binding residues include Ser407 and Ser416. Lys430 is covalently cross-linked (Glycyl lysine isopeptide (Lys-Gly) (interchain with G-Cter in SUMO1); alternate). Lys430 participates in a covalent cross-link: Glycyl lysine isopeptide (Lys-Gly) (interchain with G-Cter in SUMO2); alternate. Residue Lys451 forms a Glycyl lysine isopeptide (Lys-Gly) (interchain with G-Cter in SUMO1) linkage.

Belongs to the MYST (SAS/MOZ) family. Component of the NuA4 histone acetyltransferase complex which contains the catalytic subunit KAT5/TIP60 and the subunits EP400, TRRAP/PAF400, BRD8/SMAP, EPC1, DMAP1/DNMAP1, RUVBL1/TIP49, RUVBL2, ING3, actin, ACTL6A/BAF53A, MORF4L1/MRG15, MORF4L2/MRGX, MRGBP, YEATS4/GAS41, VPS72/YL1 and MEAF6. KAT5/TIP60, EPC1, and ING3 together constitute a minimal HAT complex termed Piccolo NuA4. The NuA4 complex interacts with MYC. Interacts with ATM. Interacts with JADE1. Interacts with PLA2G4A/CPLA2, EDNRA and HDAC7. Interacts with the cytoplasmic tail of APP and APBB1/FE65. Interacts with TRIM24 and TRIM68. Forms a complex with SENP6 and UBE2I in response to UV irradiation. Identified in a complex with HINT1. Interacts with ATF2 and CUL3. Interacts with NR1D2 (via N-terminus). Component of a SWR1-like complex. Interacts with FOXP3. Interacts with ZBTB49. Interacts with SRF. Interacts with ATF3; promoting autoacetylation and deubiquitination by USP7. Interacts with EP300/p300; interaction promotes KAT5 autoacetylation. Interacts with PRKDC; interaction is impaired following KAT5 sumoylation. Interacts with GPR50. Interacts with NME3; this interaction enables recruitment of NME3 at DNA damage sites where it plays a role in the repair of DNA. Phosphorylated on Ser-86 and Ser-90; enhanced during G2/M phase. The phosphorylated form has a higher activity. Phosphorylation at Ser-90 by CDK1 or CDK9 is a prerequisite for phosphorylation at Ser-86 by GSK3. Phosphorylation at Ser-86 by GSK3 (GSK3A or GSK3B) activates acetyltransferase and acyltransferase activity. Phosphorylation at Ser-90 by CDK9 promotes KAT5 recruitment to chromatin. Phosphorylation by VRK1 following DNA damage promotes KAT5 association with chromatin and histone acetyltransferase activity. In terms of processing, autoacetylated. Autoacetylation is required for histone acetyltransferase activity. Autoacetylation at Lys-327 is facilitated by interaction with EP300/p300: it prevents ubiquitination and subsequent degradation by the proteasome and promotes acetylation of target proteins. Deacetylated by HDAC3 and SIRT1. Deacetylation by HDAC3 promotes its ubiquitination and cytoplasmic localization. Post-translationally, sumoylated by UBE2I at Lys-430 and Lys-451, leading to increase of its histone acetyltransferase activity in UV-induced DNA damage response, as well as its translocation to nuclear bodies. Sumoylation with SUMO2 by PIAS4 at Lys-430 promotes repair of DNA double-strand breaks (DSBs) via homologous recombination (HR). Sumoylation by PIAS4 impairs interaction with PRKDC, inhibiting non-homologous end joining (NHEJ)-mediated repair of DSBs, thereby facilitating HR. Desumoylated by SENP3. Ubiquitinated by MDM2, leading to its proteasome-dependent degradation. Ubiquitination is prevented by autoacetylation at Lys-327. Ubiquitinated following deacetylation by HDAC3, leading to cytoplasmic localization. Deubiquitinated by USP7 following interaction with ATF3, promoting its stabilization. As to expression, expressed in testis, heart, brain, kidney and liver. Weakly expressed in lung.

It localises to the nucleus. The protein resides in the chromosome. Its subcellular location is the cytoplasm. It is found in the centromere. The protein localises to the kinetochore. It localises to the cytoskeleton. The protein resides in the spindle pole. Its subcellular location is the nucleolus. It is found in the perinuclear region. The enzyme catalyses L-lysyl-[histone] + acetyl-CoA = N(6)-acetyl-L-lysyl-[histone] + CoA + H(+). The catalysed reaction is L-lysyl-[protein] + acetyl-CoA = N(6)-acetyl-L-lysyl-[protein] + CoA + H(+). It catalyses the reaction (2E)-butenoyl-CoA + L-lysyl-[protein] = N(6)-(2E)-butenoyl-L-lysyl-[protein] + CoA + H(+). It carries out the reaction 2-hydroxyisobutanoyl-CoA + L-lysyl-[protein] = N(6)-(2-hydroxyisobutanoyl)-L-lysyl-[protein] + CoA + H(+). The enzyme catalyses (S)-lactoyl-CoA + L-lysyl-[protein] = N(6)-[(S)-lactoyl]-L-lysyl-[protein] + CoA + H(+). Its activity is regulated as follows. Acyltransferase and acetyltransferase activities are activated by phosphorylation and autoacetylation. Autoacetylation activates the histone acetyltransferase activity. Its function is as follows. Catalytic subunit of the NuA4 histone acetyltransferase complex, a multiprotein complex involved in transcriptional activation of select genes principally by acetylation of nucleosomal histones H2A and H4. Histone acetylation alters nucleosome-DNA interactions and promotes interaction of the modified histones with other proteins which positively regulate transcription. The NuA4 histone acetyltransferase complex is required for the activation of transcriptional programs associated with proto-oncogene mediated growth induction, tumor suppressor mediated growth arrest and replicative senescence, apoptosis, and DNA repair. The NuA4 complex plays a direct role in repair of DNA double-strand breaks (DSBs) by promoting homologous recombination (HR): the complex inhibits TP53BP1 binding to chromatin via MBTD1, which recognizes and binds histone H4 trimethylated at 'Lys-20' (H4K20me), and KAT5 that catalyzes acetylation of 'Lys-15' of histone H2A (H2AK15ac), thereby blocking the ubiquitination mark required for TP53BP1 localization at DNA breaks. Also involved in DSB repair by mediating acetylation of 'Lys-5' of histone H2AX (H2AXK5ac), promoting NBN/NBS1 assembly at the sites of DNA damage. The NuA4 complex plays a key role in hematopoietic stem cell maintenance and is required to maintain acetylated H2A.Z/H2AZ1 at MYC target genes. The NuA4 complex is also required for spermatid development by promoting acetylation of histones: histone hyperacetylation is required for histone replacement during the transition from round to elongating spermatids. Component of a SWR1-like complex that specifically mediates the removal of histone H2A.Z/H2AZ1 from the nucleosome. Also acetylates non-histone proteins, such as BMAL1, ATM, AURKB, CHKA, CGAS, ERCC4/XPF, LPIN1, TP53/p53, NDC80/HEC1, NR1D2, RAN, SOX4, FOXP3, SQSTM1, ULK1 and RUBCNL/Pacer. Directly acetylates and activates ATM. Promotes nucleotide excision repair (NER) by mediating acetylation of ERCC4/XPF, thereby promoting formation of the ERCC4-ERCC1 complex. Relieves NR1D2-mediated inhibition of APOC3 expression by acetylating NR1D2. Acts as a regulator of regulatory T-cells (Treg) by catalyzing FOXP3 acetylation, thereby promoting FOXP3 transcriptional repressor activity. Involved in skeletal myoblast differentiation by mediating acetylation of SOX4. Catalyzes acetylation of APBB1/FE65, increasing its transcription activator activity. Promotes transcription elongation during the activation phase of the circadian cycle by catalyzing acetylation of BMAL1, promoting elongation of circadian transcripts. Together with GSK3 (GSK3A or GSK3B), acts as a regulator of autophagy: phosphorylated at Ser-86 by GSK3 under starvation conditions, leading to activate acetyltransferase activity and promote acetylation of key autophagy regulators, such as ULK1 and RUBCNL/Pacer. Acts as a regulator of the cGAS-STING innate antiviral response by catalyzing acetylation the N-terminus of CGAS, thereby promoting CGAS DNA-binding and activation. Also regulates lipid metabolism by mediating acetylation of CHKA or LPIN1. Promotes lipolysis of lipid droplets following glucose deprivation by mediating acetylation of isoform 1 of CHKA, thereby promoting monomerization of CHKA and its conversion into a tyrosine-protein kinase. Acts as a regulator of fatty-acid-induced triacylglycerol synthesis by catalyzing acetylation of LPIN1, thereby promoting the synthesis of diacylglycerol. In addition to protein acetyltransferase, can use different acyl-CoA substrates, such as (2E)-butenoyl-CoA (crotonyl-CoA), S-lactoyl-CoA (lactyl-CoA) and 2-hydroxyisobutanoyl-CoA (2-hydroxyisobutyryl-CoA), and is able to mediate protein crotonylation, lactylation and 2-hydroxyisobutyrylation, respectively. Acts as a key regulator of chromosome segregation and kinetochore-microtubule attachment during mitosis by mediating acetylation or crotonylation of target proteins. Catalyzes acetylation of AURKB at kinetochores, increasing AURKB activity and promoting accurate chromosome segregation in mitosis. Acetylates RAN during mitosis, promoting microtubule assembly at mitotic chromosomes. Acetylates NDC80/HEC1 during mitosis, promoting robust kinetochore-microtubule attachment. Catalyzes crotonylation of MAPRE1/EB1, thereby ensuring accurate spindle positioning in mitosis. Catalyzes lactylation of NBN/NBS1 in response to DNA damage, thereby promoting DNA double-strand breaks (DSBs) via homologous recombination (HR). The sequence is that of Histone acetyltransferase KAT5 from Mus musculus (Mouse).